A 411-amino-acid chain; its full sequence is Ubiquitin-binding protein CUE5 (411 aa).

Residues 1–12 (MEEKEGIKDSSL) show a composition bias toward basic and acidic residues. Disordered regions lie at residues 1–102 (MEEK…NPIL) and 142–411 (ESGK…DDEM). Lys15 is covalently cross-linked (Glycyl lysine isopeptide (Lys-Gly) (interchain with G-Cter in ubiquitin)). Residues Ser21 and Ser36 each carry the phosphoserine modification. The segment covering 25–58 (DISKTTDVDLNSDGKKDNDTSAKDGTPKVEEKVN) has biased composition (basic and acidic residues). Residue Lys59 forms a Glycyl lysine isopeptide (Lys-Gly) (interchain with G-Cter in ubiquitin) linkage. Thr70 carries the post-translational modification Phosphothreonine. Residue Lys76 forms a Glycyl lysine isopeptide (Lys-Gly) (interchain with G-Cter in ubiquitin) linkage. A Phosphoserine modification is found at Ser91. The 44-residue stretch at 97 to 140 (KENPILQELKDAFPNLEEKYIKAVIIASQGVLSPAFNALLFLSD) folds into the CUE domain. Residue Lys156 forms a Glycyl lysine isopeptide (Lys-Gly) (interchain with G-Cter in ubiquitin) linkage. Thr167 carries the phosphothreonine modification. Positions 209–219 (NPNEREQHHED) are enriched in basic and acidic residues. The residue at position 220 (Ser220) is a Phosphoserine. The segment covering 230–242 (VEKDLPELTDRAG) has biased composition (basic and acidic residues). Residues 245–256 (LQDTANKVSNWI) show a composition bias toward polar residues. 2 positions are modified to phosphoserine: Ser309 and Ser318. Phosphothreonine is present on Thr346. The residue at position 348 (Ser348) is a Phosphoserine. Thr352 is subject to Phosphothreonine. Lys354 is covalently cross-linked (Glycyl lysine isopeptide (Lys-Gly) (interchain with G-Cter in ubiquitin)). Residues Thr364 and Thr367 each carry the phosphothreonine modification. The AIM motif lies at 373–376 (WQPL). Lys396 participates in a covalent cross-link: Glycyl lysine isopeptide (Lys-Gly) (interchain with G-Cter in ubiquitin). Acidic residues predominate over residues 399-411 (DEDEFLINSDDEM). Ser407 carries the post-translational modification Phosphoserine.

In terms of assembly, interacts with ATG8 (via AIM motif), CLB2, and ubiquitin (via CUE domain).

The protein resides in the cytoplasm. In terms of biological role, connects the ubiquitin pathway to autophagy by functioning as a ubiquitin-ATG8 adapter and thus mediating autophagic clearance of ubiquitin conjugates under starvation conditions. The CUE5-dependent selective autophagy pathway plays an important role in clearance of cytotoxic protein aggregates. Not required for cytoplasmic to vacuole pathway (cvt), mitophagy, pexophagy, or ribophagy. This is Ubiquitin-binding protein CUE5 from Saccharomyces cerevisiae (strain ATCC 204508 / S288c) (Baker's yeast).